The following is a 163-amino-acid chain: 2,3-dimethylmalate dehydratase small subunit (163 aa).

This sequence belongs to the LeuD family. LeuD type 2 subfamily. In terms of assembly, heterodimer of a large and a small subunit.

The catalysed reaction is (2R,3S)-2,3-dimethylmalate = dimethylmaleate + H2O. The protein operates within cofactor degradation; nicotinate degradation; propanoate and pyruvate from 6-hydroxynicotinate: step 7/8. This is 2,3-dimethylmalate dehydratase small subunit from Eubacterium barkeri (Clostridium barkeri).